A 223-amino-acid chain; its full sequence is Urease accessory protein UreG (223 aa).

The tract at residues 1-30 is disordered; sequence MAKHSHDHTHDHHDRPRRVRKPGEPLRIGV. GTP is bound at residue 32-39; it reads GPVGSGKT.

It belongs to the SIMIBI class G3E GTPase family. UreG subfamily. In terms of assembly, homodimer. UreD, UreF and UreG form a complex that acts as a GTP-hydrolysis-dependent molecular chaperone, activating the urease apoprotein by helping to assemble the nickel containing metallocenter of UreC. The UreE protein probably delivers the nickel.

It is found in the cytoplasm. In terms of biological role, facilitates the functional incorporation of the urease nickel metallocenter. This process requires GTP hydrolysis, probably effectuated by UreG. This chain is Urease accessory protein UreG, found in Mycobacterium ulcerans (strain Agy99).